Here is a 242-residue protein sequence, read N- to C-terminus: MSSFFVAGTDTNVGKTTAARAMIQALQGQGVQVVGYKPIACCGEESIYPVAQSENTSDYDHFVNADVLTLMHSTKENVSYQDINSYTFSHCAPMLTQDKMRIKLDKINCDLTRLNQTYQSVVVEGSFGLMTPMAEGKSFADWIAQQKMPVVLVVGIKDGCVNHALLTVKVIQQLGVPLLGWIANRINPLLSHYAEIVDLLVEHIDAPLLGKIPYLHKPEEQELGHYLTNIDRLMYMQTEFIK.

ATP is bound at residue 12–17; it reads NVGKTT. Thr-16 is a binding site for Mg(2+). The active site involves Lys-37. An ATP-binding site is contributed by Asp-66. Residues Asp-66 and Glu-124 each coordinate Mg(2+). ATP is bound by residues 184–185, 213–215, and Glu-220; these read NR and PYL.

This sequence belongs to the dethiobiotin synthetase family. In terms of assembly, homodimer. Mg(2+) serves as cofactor.

The protein localises to the cytoplasm. It carries out the reaction (7R,8S)-7,8-diammoniononanoate + CO2 + ATP = (4R,5S)-dethiobiotin + ADP + phosphate + 3 H(+). It participates in cofactor biosynthesis; biotin biosynthesis; biotin from 7,8-diaminononanoate: step 1/2. Functionally, catalyzes a mechanistically unusual reaction, the ATP-dependent insertion of CO2 between the N7 and N8 nitrogen atoms of 7,8-diaminopelargonic acid (DAPA, also called 7,8-diammoniononanoate) to form a ureido ring. This is ATP-dependent dethiobiotin synthetase BioD 1 from Haemophilus influenzae (strain ATCC 51907 / DSM 11121 / KW20 / Rd).